A 180-amino-acid polypeptide reads, in one-letter code: Large ribosomal subunit protein uL5 (180 aa).

Belongs to the universal ribosomal protein uL5 family. As to quaternary structure, part of the 50S ribosomal subunit; part of the 5S rRNA/L5/L18/L25 subcomplex. Contacts the 5S rRNA and the P site tRNA. Forms a bridge to the 30S subunit in the 70S ribosome.

In terms of biological role, this is one of the proteins that bind and probably mediate the attachment of the 5S RNA into the large ribosomal subunit, where it forms part of the central protuberance. In the 70S ribosome it contacts protein S13 of the 30S subunit (bridge B1b), connecting the 2 subunits; this bridge is implicated in subunit movement. Contacts the P site tRNA; the 5S rRNA and some of its associated proteins might help stabilize positioning of ribosome-bound tRNAs. The sequence is that of Large ribosomal subunit protein uL5 from Leuconostoc citreum (strain KM20).